We begin with the raw amino-acid sequence, 182 residues long: Ribosome maturation factor RimM (182 aa).

Positions 101 to 174 (QDEYFIHQLY…QIVVRLLPGL (74 aa)) constitute a PRC barrel domain.

This sequence belongs to the RimM family. In terms of assembly, binds ribosomal protein uS19.

Its subcellular location is the cytoplasm. Its function is as follows. An accessory protein needed during the final step in the assembly of 30S ribosomal subunit, possibly for assembly of the head region. Essential for efficient processing of 16S rRNA. May be needed both before and after RbfA during the maturation of 16S rRNA. It has affinity for free ribosomal 30S subunits but not for 70S ribosomes. The polypeptide is Ribosome maturation factor RimM (Roseiflexus sp. (strain RS-1)).